A 648-amino-acid chain; its full sequence is Threonine--tRNA ligase (648 aa).

The 61-residue stretch at 1–61 folds into the TGS domain; sequence MIKITFPNTS…NENASVKLYK (61 aa). Residues 243–542 are catalytic; sequence DHRRIGKEME…MIEHTGGKFP (300 aa). Positions 338, 389, and 519 each coordinate Zn(2+).

The protein belongs to the class-II aminoacyl-tRNA synthetase family. As to quaternary structure, homodimer. Zn(2+) serves as cofactor.

The protein localises to the cytoplasm. It carries out the reaction tRNA(Thr) + L-threonine + ATP = L-threonyl-tRNA(Thr) + AMP + diphosphate + H(+). Catalyzes the attachment of threonine to tRNA(Thr) in a two-step reaction: L-threonine is first activated by ATP to form Thr-AMP and then transferred to the acceptor end of tRNA(Thr). Also edits incorrectly charged L-seryl-tRNA(Thr). This chain is Threonine--tRNA ligase, found in Azobacteroides pseudotrichonymphae genomovar. CFP2.